The sequence spans 412 residues: Peptidase T (412 aa).

His-84 is a Zn(2+) binding site. Asp-86 is a catalytic residue. Asp-146 contacts Zn(2+). Catalysis depends on Glu-179, which acts as the Proton acceptor. Residues Glu-180, Asp-202, and His-385 each coordinate Zn(2+).

The protein belongs to the peptidase M20B family. It depends on Zn(2+) as a cofactor.

The protein localises to the cytoplasm. The enzyme catalyses Release of the N-terminal residue from a tripeptide.. Cleaves the N-terminal amino acid of tripeptides. The sequence is that of Peptidase T from Haemophilus influenzae (strain 86-028NP).